Reading from the N-terminus, the 136-residue chain is Small ribosomal subunit protein eS17B (136 aa).

The protein belongs to the eukaryotic ribosomal protein eS17 family. In terms of assembly, component of the small ribosomal subunit (SSU). Mature yeast ribosomes consist of a small (40S) and a large (60S) subunit. The 40S small subunit contains 1 molecule of ribosomal RNA (18S rRNA) and 33 different proteins (encoded by 57 genes). The large 60S subunit contains 3 rRNA molecules (25S, 5.8S and 5S rRNA) and 46 different proteins (encoded by 81 genes).

It is found in the cytoplasm. Its function is as follows. Component of the ribosome, a large ribonucleoprotein complex responsible for the synthesis of proteins in the cell. The small ribosomal subunit (SSU) binds messenger RNAs (mRNAs) and translates the encoded message by selecting cognate aminoacyl-transfer RNA (tRNA) molecules. The large subunit (LSU) contains the ribosomal catalytic site termed the peptidyl transferase center (PTC), which catalyzes the formation of peptide bonds, thereby polymerizing the amino acids delivered by tRNAs into a polypeptide chain. The nascent polypeptides leave the ribosome through a tunnel in the LSU and interact with protein factors that function in enzymatic processing, targeting, and the membrane insertion of nascent chains at the exit of the ribosomal tunnel. The chain is Small ribosomal subunit protein eS17B from Saccharomyces cerevisiae (strain ATCC 204508 / S288c) (Baker's yeast).